The following is a 440-amino-acid chain: Chromosome partition protein MukF (440 aa).

A leucine-zipper region spans residues 208–236 (LSETSGTLRELQDTLEAAGDKLQANLLRI).

Belongs to the MukF family. As to quaternary structure, interacts, and probably forms a ternary complex, with MukE and MukB via its C-terminal region. The complex formation is stimulated by calcium or magnesium. It is required for an interaction between MukE and MukB.

Its subcellular location is the cytoplasm. The protein resides in the nucleoid. Functionally, involved in chromosome condensation, segregation and cell cycle progression. May participate in facilitating chromosome segregation by condensation DNA from both sides of a centrally located replisome during cell division. Not required for mini-F plasmid partitioning. Probably acts via its interaction with MukB and MukE. Overexpression results in anucleate cells. It has a calcium binding activity. The protein is Chromosome partition protein MukF of Escherichia coli O157:H7.